A 270-amino-acid chain; its full sequence is Putative serine acetyltransferase (270 aa).

This sequence belongs to the transferase hexapeptide repeat family.

It localises to the cytoplasm. It is found in the nucleus. It catalyses the reaction L-serine + acetyl-CoA = O-acetyl-L-serine + CoA. It functions in the pathway amino-acid biosynthesis; L-cysteine biosynthesis; L-cysteine from L-serine: step 1/2. The protein is Putative serine acetyltransferase of Schizosaccharomyces pombe (strain 972 / ATCC 24843) (Fission yeast).